The following is a 125-amino-acid chain: Succinate dehydrogenase cytochrome b556 subunit (125 aa).

Over 1–22 the chain is Cytoplasmic; it reads MNAKRPVNLDLTKFHFPPMAIL. A helical membrane pass occupies residues 23–48; that stretch reads SIGHRISGFVLFLCMPLMFYLLHRAT. The Periplasmic segment spans residues 49-65; that stretch reads ASAESFYHLHQLLLHNG. Residues 66-86 traverse the membrane as a helical segment; sequence WIKLAVWIMLSATLFHLFAGI. Histidine 81 lines the heme pocket. At 87 to 104 the chain is on the cytoplasmic side; that stretch reads RHLAMDLGFWESVPEGRI. The chain crosses the membrane as a helical span at residues 105-125; sequence SAYTVFVVSFIAIVLAGVWIW.

It belongs to the cytochrome b560 family. In terms of assembly, part of an enzyme complex containing four subunits: a flavoprotein, an iron-sulfur protein, plus two membrane-anchoring proteins, SdhC and SdhD. The complex can form homotrimers. The cofactor is heme.

The protein localises to the cell inner membrane. The protein operates within carbohydrate metabolism; tricarboxylic acid cycle. Functionally, membrane-anchoring subunit of succinate dehydrogenase (SDH). The protein is Succinate dehydrogenase cytochrome b556 subunit (sdhC) of Coxiella burnetii (strain RSA 493 / Nine Mile phase I).